The chain runs to 282 residues: Acetyl-coenzyme A carboxylase carboxyl transferase subunit beta (282 aa).

In terms of domain architecture, CoA carboxyltransferase N-terminal spans 29 to 282 (LPINCPSCSA…LSSLLGLHQG (254 aa)). The Zn(2+) site is built by cysteine 33, cysteine 36, cysteine 52, and cysteine 55. The segment at 33–55 (CPSCSARIAAEALQRNLKVCPKC) adopts a C4-type zinc-finger fold.

The protein belongs to the AccD/PCCB family. In terms of assembly, acetyl-CoA carboxylase is a heterohexamer composed of biotin carboxyl carrier protein (AccB), biotin carboxylase (AccC) and two subunits each of ACCase subunit alpha (AccA) and ACCase subunit beta (AccD). It depends on Zn(2+) as a cofactor.

The protein localises to the cytoplasm. The enzyme catalyses N(6)-carboxybiotinyl-L-lysyl-[protein] + acetyl-CoA = N(6)-biotinyl-L-lysyl-[protein] + malonyl-CoA. It functions in the pathway lipid metabolism; malonyl-CoA biosynthesis; malonyl-CoA from acetyl-CoA: step 1/1. Component of the acetyl coenzyme A carboxylase (ACC) complex. Biotin carboxylase (BC) catalyzes the carboxylation of biotin on its carrier protein (BCCP) and then the CO(2) group is transferred by the transcarboxylase to acetyl-CoA to form malonyl-CoA. The sequence is that of Acetyl-coenzyme A carboxylase carboxyl transferase subunit beta from Syntrophomonas wolfei subsp. wolfei (strain DSM 2245B / Goettingen).